A 322-amino-acid chain; its full sequence is Cytochrome f (322 aa).

The N-terminal stretch at 1–35 (MQTRNTFSWTWIREEITRSISVSLMIYIITWSSIS) is a signal peptide. Heme is bound by residues tyrosine 38, cysteine 58, cysteine 61, and histidine 62. The helical transmembrane segment at 288–308 (VQGLLFFLGSVVLAQIFLVLK) threads the bilayer.

This sequence belongs to the cytochrome f family. In terms of assembly, the 4 large subunits of the cytochrome b6-f complex are cytochrome b6, subunit IV (17 kDa polypeptide, petD), cytochrome f and the Rieske protein, while the 4 small subunits are PetG, PetL, PetM and PetN. The complex functions as a dimer. Heme serves as cofactor.

The protein resides in the plastid. It localises to the chloroplast thylakoid membrane. In terms of biological role, component of the cytochrome b6-f complex, which mediates electron transfer between photosystem II (PSII) and photosystem I (PSI), cyclic electron flow around PSI, and state transitions. In Aethionema grandiflorum (Persian stone-cress), this protein is Cytochrome f.